The sequence spans 78 residues: Mitotic-spindle organizing protein 1 (78 aa).

An N-acetylalanine modification is found at alanine 2.

The protein belongs to the MOZART1 family. Associates with the gamma-tubulin ring complex (gTuRC) consisting of TUBGCP2, TUBGCP3, TUBGCP4, TUBGCP5 and TUBGCP6 and gamma-tubulin TUBG1 or TUBG2; within the complex, interacts with TUBGCP3 and TUBGCP6 to form a luminal bridge with actin that stabilizes the initial structure during complex assembly. Interacts with TUBG1.

Its subcellular location is the cytoplasm. It localises to the cytoskeleton. The protein localises to the microtubule organizing center. The protein resides in the centrosome. It is found in the spindle. Required for the recruitment and the assembly of the gamma-tubulin ring complex (gTuRC) at the centrosome. The gTuRC regulates the minus-end nucleation of alpha-beta tubulin heterodimers that grow into microtubule protafilaments, a critical step in centrosome duplication and spindle formation. The polypeptide is Mitotic-spindle organizing protein 1 (Mzt1) (Mus musculus (Mouse)).